Reading from the N-terminus, the 178-residue chain is SCAN domain-containing protein 1 (178 aa).

The segment at 1-107 (MAATEQSLAP…GSRPGPETFR (107 aa)) is disordered. Positions 9-18 (APAGSSAPPS) are enriched in low complexity. Residues 36 to 54 (GSSSTPEAPSIPDSSNPSA) are compositionally biased toward polar residues. The SCAN box domain occupies 107–178 (RQRFRQFRYQ…RRRTDVRITG (72 aa)).

Interacts with ZNF202.

It is found in the nucleus. Functionally, may regulate transcriptional activity. The chain is SCAN domain-containing protein 1 (SCAND1) from Bos taurus (Bovine).